We begin with the raw amino-acid sequence, 1453 residues long: Scavenger receptor cysteine-rich type 1 protein M160 (1453 aa).

Residues 1–40 (MMLPQNSWHIDFGRCCCHQNLFSAVVTCILLLNSCFLISS) form the signal peptide. At 41–1359 (FNGTDLELRL…LKSLNASSGH (1319 aa)) the chain is on the extracellular side. N-linked (GlcNAc...) asparagine glycosylation is found at Asn42, Asn78, Asn120, and Asn161. SRCR domains are found at residues 48-148 (LRLV…VNCY), 155-255 (LRLV…LTCY), 262-362 (LRLV…VICS), 369-469 (LRLA…VICS), 476-576 (LRLV…VTCS), 583-683 (LRLV…VICS), 690-790 (LRLV…LICS), 795-895 (PRLV…VVCS), and 900-1000 (VRLV…VICT). 3 disulfides stabilise this stretch: Cys73-Cys137, Cys86-Cys147, and Cys117-Cys127. Disulfide bonds link Cys180/Cys244, Cys193/Cys254, Cys224/Cys234, Cys287/Cys351, Cys300/Cys361, and Cys331/Cys341. Residues Asn334, Asn377, Asn441, Asn548, and Asn637 are each glycosylated (N-linked (GlcNAc...) asparagine). 18 cysteine pairs are disulfide-bonded: Cys394/Cys458, Cys407/Cys468, Cys438/Cys448, Cys501/Cys565, Cys514/Cys575, Cys545/Cys555, Cys608/Cys672, Cys621/Cys682, Cys652/Cys662, Cys715/Cys779, Cys728/Cys789, Cys759/Cys769, Cys820/Cys884, Cys833/Cys894, Cys864/Cys874, Cys925/Cys989, Cys938/Cys999, and Cys969/Cys979. N-linked (GlcNAc...) asparagine glycosylation is found at Asn972, Asn1013, Asn1084, and Asn1104. SRCR domains follow at residues 1036–1136 (LRLV…VICS), 1141–1243 (LRLY…ITCE), and 1246–1346 (IRVR…VRCS). 3 cysteine pairs are disulfide-bonded: Cys1061–Cys1125, Cys1074–Cys1135, and Cys1105–Cys1115. 2 N-linked (GlcNAc...) asparagine glycosylation sites follow: Asn1161 and Asn1171. 5 disulfide bridges follow: Cys1181–Cys1242, Cys1212–Cys1222, Cys1271–Cys1335, Cys1284–Cys1345, and Cys1315–Cys1325. N-linked (GlcNAc...) asparagine glycans are attached at residues Asn1318 and Asn1354. Residues 1360-1380 (LALILSSIFGLLLLVLFILFL) form a helical membrane-spanning segment. Residues 1381 to 1453 (TWCRVQKQKH…GVLPASEATK (73 aa)) lie on the Cytoplasmic side of the membrane. Positions 1418–1435 (EDPHGTRTSDDTPNHGCE) are enriched in basic and acidic residues. Residues 1418-1453 (EDPHGTRTSDDTPNHGCEDASDTSLLGVLPASEATK) are disordered.

As to expression, isoform 1 is highly expressed in the spleen, lymph nodes, thymus, and fetal liver and weakly expressed in bone marrow and no expression was found in peripheral blood leukocytes. Isoform 1 expression is restricted to the monocyte and macrophage cell lines. Isoform 2 is only expressed in spleen.

Its subcellular location is the cell membrane. The protein resides in the secreted. The polypeptide is Scavenger receptor cysteine-rich type 1 protein M160 (CD163L1) (Homo sapiens (Human)).